The primary structure comprises 360 residues: Terpene synthase 5 (360 aa).

Residues 87–92 carry the DDxx(x)D/E motif motif; sequence DDFLER. The short motif at 237–245 is the NDxxSxxxD/E motif element; sequence NDCVSYAKE.

The protein belongs to the terpene synthase family.

Its function is as follows. Terpene synthase that converts its substrate farnesyl diphosphate (FPP) into 2 yet unidentified sesquiterpenes. This Dictyostelium purpureum (Slime mold) protein is Terpene synthase 5.